A 311-amino-acid chain; its full sequence is tRNA-cytidine(32) 2-sulfurtransferase (311 aa).

Positions Ser-47 to Ser-52 match the PP-loop motif motif. [4Fe-4S] cluster-binding residues include Cys-122, Cys-125, and Cys-213.

The protein belongs to the TtcA family. In terms of assembly, homodimer. It depends on Mg(2+) as a cofactor. Requires [4Fe-4S] cluster as cofactor.

It localises to the cytoplasm. The catalysed reaction is cytidine(32) in tRNA + S-sulfanyl-L-cysteinyl-[cysteine desulfurase] + AH2 + ATP = 2-thiocytidine(32) in tRNA + L-cysteinyl-[cysteine desulfurase] + A + AMP + diphosphate + H(+). It functions in the pathway tRNA modification. Its function is as follows. Catalyzes the ATP-dependent 2-thiolation of cytidine in position 32 of tRNA, to form 2-thiocytidine (s(2)C32). The sulfur atoms are provided by the cysteine/cysteine desulfurase (IscS) system. In Salmonella arizonae (strain ATCC BAA-731 / CDC346-86 / RSK2980), this protein is tRNA-cytidine(32) 2-sulfurtransferase.